The chain runs to 415 residues: Cysteate synthase (415 aa).

Lys104 carries the N6-(pyridoxal phosphate)lysine modification. 2 residues coordinate pyridoxal 5'-phosphate: Asn131 and Thr376.

Belongs to the threonine synthase family. Cysteate synthase subfamily. In terms of assembly, homotrimer. Pyridoxal 5'-phosphate serves as cofactor.

It carries out the reaction O-phospho-L-serine + sulfite + H(+) = L-cysteate + phosphate. It functions in the pathway cofactor biosynthesis; coenzyme M biosynthesis. Specifically catalyzes the beta-elimination of phosphate from L-phosphoserine and the beta-addition of sulfite to the dehydroalanine intermediate to produce L-cysteate. The polypeptide is Cysteate synthase (Methanothrix thermoacetophila (strain DSM 6194 / JCM 14653 / NBRC 101360 / PT) (Methanosaeta thermophila)).